We begin with the raw amino-acid sequence, 560 residues long: Membrane protein insertase YidC (560 aa).

The next 6 helical transmembrane spans lie at 5–25, 334–354, 357–377, 431–451, 476–496, and 522–542; these read IINL…WQYF, AIDF…MNFF, YVGN…LLMF, LPIL…YVTI, LFGL…WPIL, and FMPL…LIYW.

This sequence belongs to the OXA1/ALB3/YidC family. Type 1 subfamily. As to quaternary structure, interacts with the Sec translocase complex via SecD. Specifically interacts with transmembrane segments of nascent integral membrane proteins during membrane integration.

Its subcellular location is the cell inner membrane. Functionally, required for the insertion and/or proper folding and/or complex formation of integral membrane proteins into the membrane. Involved in integration of membrane proteins that insert both dependently and independently of the Sec translocase complex, as well as at least some lipoproteins. Aids folding of multispanning membrane proteins. This chain is Membrane protein insertase YidC, found in Rickettsia prowazekii (strain Madrid E).